The chain runs to 118 residues: Ribosome-binding factor A (118 aa).

The protein belongs to the RbfA family. Monomer. Binds 30S ribosomal subunits, but not 50S ribosomal subunits or 70S ribosomes.

It is found in the cytoplasm. Functionally, one of several proteins that assist in the late maturation steps of the functional core of the 30S ribosomal subunit. Associates with free 30S ribosomal subunits (but not with 30S subunits that are part of 70S ribosomes or polysomes). Required for efficient processing of 16S rRNA. May interact with the 5'-terminal helix region of 16S rRNA. The sequence is that of Ribosome-binding factor A from Streptococcus pyogenes serotype M1.